Here is a 470-residue protein sequence, read N- to C-terminus: Glutamate--tRNA ligase 1 (470 aa).

The short motif at 8 to 18 is the 'HIGH' region element; that stretch reads PSPTGYLHVGG. The short motif at 250 to 254 is the 'KMSKS' region element; that stretch reads KLSKR. Lysine 253 lines the ATP pocket.

The protein belongs to the class-I aminoacyl-tRNA synthetase family. Glutamate--tRNA ligase type 1 subfamily. Monomer.

It is found in the cytoplasm. It carries out the reaction tRNA(Glu) + L-glutamate + ATP = L-glutamyl-tRNA(Glu) + AMP + diphosphate. Catalyzes the attachment of glutamate to tRNA(Glu) in a two-step reaction: glutamate is first activated by ATP to form Glu-AMP and then transferred to the acceptor end of tRNA(Glu). This is Glutamate--tRNA ligase 1 from Pseudothermotoga lettingae (strain ATCC BAA-301 / DSM 14385 / NBRC 107922 / TMO) (Thermotoga lettingae).